The primary structure comprises 79 residues: Cell division protein ZapB (79 aa).

Positions 6–78 (FEKLEVKVQQ…LRALLGKMEE (73 aa)) form a coiled coil.

This sequence belongs to the ZapB family. Homodimer. The ends of the coiled-coil dimer bind to each other, forming polymers. Interacts with FtsZ.

The protein localises to the cytoplasm. Its function is as follows. Non-essential, abundant cell division factor that is required for proper Z-ring formation. It is recruited early to the divisome by direct interaction with FtsZ, stimulating Z-ring assembly and thereby promoting cell division earlier in the cell cycle. Its recruitment to the Z-ring requires functional FtsA or ZipA. In Yersinia pseudotuberculosis serotype O:1b (strain IP 31758), this protein is Cell division protein ZapB.